Consider the following 481-residue polypeptide: Aspartyl/glutamyl-tRNA(Asn/Gln) amidotransferase subunit B (481 aa).

It belongs to the GatB/GatE family. GatB subfamily. In terms of assembly, heterotrimer of A, B and C subunits.

The catalysed reaction is L-glutamyl-tRNA(Gln) + L-glutamine + ATP + H2O = L-glutaminyl-tRNA(Gln) + L-glutamate + ADP + phosphate + H(+). It catalyses the reaction L-aspartyl-tRNA(Asn) + L-glutamine + ATP + H2O = L-asparaginyl-tRNA(Asn) + L-glutamate + ADP + phosphate + 2 H(+). Functionally, allows the formation of correctly charged Asn-tRNA(Asn) or Gln-tRNA(Gln) through the transamidation of misacylated Asp-tRNA(Asn) or Glu-tRNA(Gln) in organisms which lack either or both of asparaginyl-tRNA or glutaminyl-tRNA synthetases. The reaction takes place in the presence of glutamine and ATP through an activated phospho-Asp-tRNA(Asn) or phospho-Glu-tRNA(Gln). The polypeptide is Aspartyl/glutamyl-tRNA(Asn/Gln) amidotransferase subunit B (Ehrlichia ruminantium (strain Gardel)).